The sequence spans 235 residues: Large ribosomal subunit protein uL1 (235 aa).

It belongs to the universal ribosomal protein uL1 family. Part of the 50S ribosomal subunit.

Its function is as follows. Binds directly to 23S rRNA. The L1 stalk is quite mobile in the ribosome, and is involved in E site tRNA release. Functionally, protein L1 is also a translational repressor protein, it controls the translation of the L11 operon by binding to its mRNA. This is Large ribosomal subunit protein uL1 from Nitratidesulfovibrio vulgaris (strain DSM 19637 / Miyazaki F) (Desulfovibrio vulgaris).